The sequence spans 747 residues: MSVQEDDDAAGPEVDRLRRHDSFYGDAEKVSNDKSHGTGENWARTLQLAFQSIGVVYGDVGTSPLYVYSSTFPDGVKHPDDLVGVLSLMLYTLILIPMVKYVFIVLYANDNGDGGTFALYSLISRHAKIRMIPNDQTEDANVSNYSIEAPSSQLRRAEWVKQKLESSNAAKIALFTITILGTSMVMGDGTLTPAISVLSAVSGIREKAPSLTQLQVVWISVPILIVLFSVQRFGTDKVGYSFAPVISVWFVLIAGIGAYNLAVHEITILRAFNPMYIIDYFRRNGKEAWVSLGGAVLCITGTEAMFADLGHFNIRAIQLSFTCVLFPSVALCYMGQAAYLRKFPEDVGDTFYKSLPAPLFWPVFVVAIMAAIIASQAMLSGAFAILSKALPLGCFPRVEVVHTSNKYEGQVYIPEVNFLIGVASVAITVAFQTTANIGNAYGICVVMVFSITTHLMTVVMLLIWKVRLPFIAAFYVVFTFTEFLYLSSILSKFAEGGYLPFCFSLVLMALMATWHYVHVKRYWYELDHIVPPDEMAALLARRDVRRVPGVGLLYTELVQGIPPVFPRLVDKIPSVHAVFVFMSIKHLPIPRVAPAERFIFQRVGPDAGHRIFRCVARYGYTDPLEGAKEFAAFLLDRLKVFVYEEAVFACQCAEDGGGGGGGDDDGVLRRAEEMAAEEKRLIDAEAERGLVYLMGEANVEAAPGSSLMKQIVVNYVYTRLRKNLREEHKALSIPKDQLLKVGITYEI.

Over 1–47 (MSVQEDDDAAGPEVDRLRRHDSFYGDAEKVSNDKSHGTGENWARTLQ) the chain is Cytoplasmic. Residues 48–68 (LAFQSIGVVYGDVGTSPLYVY) form a helical membrane-spanning segment. Topologically, residues 69–84 (SSTFPDGVKHPDDLVG) are extracellular. Residues 85–105 (VLSLMLYTLILIPMVKYVFIV) form a helical membrane-spanning segment. Residues 106–171 (LYANDNGDGG…QKLESSNAAK (66 aa)) are Cytoplasmic-facing. Residues 172 to 192 (IALFTITILGTSMVMGDGTLT) traverse the membrane as a helical segment. Residues 193–209 (PAISVLSAVSGIREKAP) lie on the Extracellular side of the membrane. The helical transmembrane segment at 210 to 230 (SLTQLQVVWISVPILIVLFSV) threads the bilayer. Topologically, residues 231–237 (QRFGTDK) are cytoplasmic. Residues 238–258 (VGYSFAPVISVWFVLIAGIGA) traverse the membrane as a helical segment. Residues 259–288 (YNLAVHEITILRAFNPMYIIDYFRRNGKEA) are Extracellular-facing. The helical transmembrane segment at 289 to 309 (WVSLGGAVLCITGTEAMFADL) threads the bilayer. Over 310-318 (GHFNIRAIQ) the chain is Cytoplasmic. The helical transmembrane segment at 319-339 (LSFTCVLFPSVALCYMGQAAY) threads the bilayer. Residues 340-353 (LRKFPEDVGDTFYK) lie on the Extracellular side of the membrane. A helical membrane pass occupies residues 354–374 (SLPAPLFWPVFVVAIMAAIIA). At 375–410 (SQAMLSGAFAILSKALPLGCFPRVEVVHTSNKYEGQ) the chain is on the cytoplasmic side. Residues 411-431 (VYIPEVNFLIGVASVAITVAF) form a helical membrane-spanning segment. Over 432–442 (QTTANIGNAYG) the chain is Extracellular. Residues 443–463 (ICVVMVFSITTHLMTVVMLLI) traverse the membrane as a helical segment. Residues 464–469 (WKVRLP) lie on the Cytoplasmic side of the membrane. The chain crosses the membrane as a helical span at residues 470-490 (FIAAFYVVFTFTEFLYLSSIL). Over 491–496 (SKFAEG) the chain is Extracellular. The helical transmembrane segment at 497–517 (GYLPFCFSLVLMALMATWHYV) threads the bilayer. The Cytoplasmic portion of the chain corresponds to 518-747 (HVKRYWYELD…LLKVGITYEI (230 aa)).

The protein belongs to the HAK/KUP transporter (TC 2.A.72.3) family.

The protein resides in the membrane. High-affinity potassium transporter. The protein is Potassium transporter 20 (HAK20) of Oryza sativa subsp. japonica (Rice).